We begin with the raw amino-acid sequence, 280 residues long: MPTSTPSPVFGNQEFHYTREDFQQVRERLYRLTGISLAESKAQLVYSRLSRRLRLLRLGSFAEYFTHLDREPGEQQLFVNALTTNLTAFFRERHHFPLLADLARRQLQRHRPLRIWSAAASTGEEPYSIAITLVEALGSFDPPVKIVASDIDTGVLDCARQGVYPLERLEQMPAPLKKRFFLRGTGPNAGKARVVEELRQLVEFRQINLLEADWSIAGELDAIFCRNVMIYFDKPTQTRLLERMVALLRPEGLFFAGHSENFVHASHLVRSVGQTVYSPA.

In terms of domain architecture, CheR-type methyltransferase spans 10–280; the sequence is FGNQEFHYTR…SVGQTVYSPA (271 aa). Residues Asn85, Thr87, Arg91, Glu125, Asp150, 208–209, and 226–227 contribute to the S-adenosyl-L-methionine site; these read NL and RN.

Interacts with the C-terminal pentapeptide GWEEF of the methyl-accepting chemotaxis protein McpB.

The catalysed reaction is L-glutamyl-[protein] + S-adenosyl-L-methionine = [protein]-L-glutamate 5-O-methyl ester + S-adenosyl-L-homocysteine. In terms of biological role, methylation of the methyl-accepting chemotaxis proteins (MCP) to form gamma-glutamyl methyl ester residues in MCP. It specifically targets the McpB chemoreceptor. This chain is Chemotaxis protein methyltransferase 2, found in Pseudomonas aeruginosa (strain ATCC 15692 / DSM 22644 / CIP 104116 / JCM 14847 / LMG 12228 / 1C / PRS 101 / PAO1).